Consider the following 91-residue polypeptide: Small ribosomal subunit protein uS19 (91 aa).

It belongs to the universal ribosomal protein uS19 family.

Its function is as follows. Protein S19 forms a complex with S13 that binds strongly to the 16S ribosomal RNA. The sequence is that of Small ribosomal subunit protein uS19 from Saccharophagus degradans (strain 2-40 / ATCC 43961 / DSM 17024).